A 73-amino-acid polypeptide reads, in one-letter code: MKALVICLLVIFAAVIAVPVESRRKHLDYGVITKCAGPNPPPGCYPPGAQQKNPTPANEYRRGCSKITRCKRD.

An N-terminal signal peptide occupies residues 1 to 17 (MKALVICLLVIFAAVIA). 2 disulfides stabilise this stretch: Cys35–Cys44 and Cys64–Cys70.

It belongs to the plant rapid alkalinization factor (RALF) family. As to expression, expressed in flowers.

It localises to the secreted. Cell signaling peptide that may regulate plant stress, growth, and development. Mediates a rapid alkalinization of extracellular space by mediating a transient increase in the cytoplasmic Ca(2+) concentration leading to a calcium-dependent signaling events through a cell surface receptor and a concomitant activation of some intracellular mitogen-activated protein kinases. This is Protein RALF-like 10 (RALFL10) from Arabidopsis thaliana (Mouse-ear cress).